A 190-amino-acid polypeptide reads, in one-letter code: ADP-ribosylation factor F (190 aa).

GTP-binding positions include 34–40, 75–79, and 136–139; these read DGAGKST, DIGGQ, and NKQD.

This sequence belongs to the small GTPase superfamily. Arf family.

The protein localises to the golgi apparatus. In terms of biological role, GTP-binding protein that may be involved in protein trafficking. May modulate vesicle budding and uncoating within the Golgi apparatus. This is ADP-ribosylation factor F (arrF) from Dictyostelium discoideum (Social amoeba).